Consider the following 84-residue polypeptide: Small ribosomal subunit protein uS17 (84 aa).

This sequence belongs to the universal ribosomal protein uS17 family. Part of the 30S ribosomal subunit.

In terms of biological role, one of the primary rRNA binding proteins, it binds specifically to the 5'-end of 16S ribosomal RNA. In Aliivibrio fischeri (strain ATCC 700601 / ES114) (Vibrio fischeri), this protein is Small ribosomal subunit protein uS17.